A 311-amino-acid polypeptide reads, in one-letter code: Porphobilinogen deaminase (311 aa).

Cys242 carries the post-translational modification S-(dipyrrolylmethanemethyl)cysteine.

It belongs to the HMBS family. Monomer. Dipyrromethane is required as a cofactor.

It carries out the reaction 4 porphobilinogen + H2O = hydroxymethylbilane + 4 NH4(+). It functions in the pathway porphyrin-containing compound metabolism; protoporphyrin-IX biosynthesis; coproporphyrinogen-III from 5-aminolevulinate: step 2/4. Tetrapolymerization of the monopyrrole PBG into the hydroxymethylbilane pre-uroporphyrinogen in several discrete steps. This chain is Porphobilinogen deaminase (hemC), found in Neisseria meningitidis serogroup A / serotype 4A (strain DSM 15465 / Z2491).